The sequence spans 394 residues: HORMA domain-containing protein 1 (394 aa).

The region spanning 24 to 226 is the HORMA domain; the sequence is HQSLVLVKRL…TPFHIFKVKV (203 aa). The segment covering 253-282 has biased composition (basic and acidic residues); that stretch reads ILRDKDVEDEQEHYTSDDLDIETKMEEQEK. Positions 253 to 394 are disordered; sequence ILRDKDVEDE…RKFSEPKEHI (142 aa). Acidic residues predominate over residues 288–300; the sequence is ELEEPSLVCEEDE. 2 stretches are compositionally biased toward polar residues: residues 310–324 and 343–352; these read LSIS…VNKT and KMANGNQPVK. Residues 362-374 are compositionally biased toward basic and acidic residues; sequence QHESGRIVLHHFD. S376 is modified (phosphoserine). Positions 383–386 match the Nuclear localization signal motif; it reads KRRK.

Interacts with HORMAD2. Interacts with IHO1. In terms of processing, phosphorylated at Ser-377 in a SPO11-dependent manner. As to expression, testis-specific. Over-expressed in carcinomas.

It localises to the nucleus. It is found in the chromosome. Plays a key role in meiotic progression. Regulates 3 different functions during meiosis: ensures that sufficient numbers of processed DNA double-strand breaks (DSBs) are available for successful homology search by increasing the steady-state numbers of single-stranded DSB ends. Promotes synaptonemal-complex formation independently of its role in homology search. Plays a key role in the male mid-pachytene checkpoint and the female meiotic prophase checkpoint: required for efficient build-up of ATR activity on unsynapsed chromosome regions, a process believed to form the basis of meiotic silencing of unsynapsed chromatin (MSUC) and meiotic prophase quality control in both sexes. The chain is HORMA domain-containing protein 1 from Homo sapiens (Human).